We begin with the raw amino-acid sequence, 293 residues long: Small ribosomal subunit biogenesis GTPase RsgA (293 aa).

One can recognise a CP-type G domain in the interval 63-223 (KNELVRPPIA…VADTPGFSSL (161 aa)). GTP-binding positions include 112-115 (SKMD) and 166-174 (GQSGVGKSS). Positions 247, 252, 254, and 260 each coordinate Zn(2+).

Belongs to the TRAFAC class YlqF/YawG GTPase family. RsgA subfamily. As to quaternary structure, monomer. Associates with 30S ribosomal subunit, binds 16S rRNA. The cofactor is Zn(2+).

It localises to the cytoplasm. In terms of biological role, one of several proteins that assist in the late maturation steps of the functional core of the 30S ribosomal subunit. Helps release RbfA from mature subunits. May play a role in the assembly of ribosomal proteins into the subunit. Circularly permuted GTPase that catalyzes slow GTP hydrolysis, GTPase activity is stimulated by the 30S ribosomal subunit. This chain is Small ribosomal subunit biogenesis GTPase RsgA, found in Bacillus cereus (strain ATCC 10987 / NRS 248).